The chain runs to 231 residues: Orotidine 5'-phosphate decarboxylase (231 aa).

Substrate contacts are provided by residues D11, K33, 60–69 (DLKLHDIPNT), T119, R181, Q190, G210, and R211. The active-site Proton donor is K62.

It belongs to the OMP decarboxylase family. Type 1 subfamily. Homodimer.

It catalyses the reaction orotidine 5'-phosphate + H(+) = UMP + CO2. Its pathway is pyrimidine metabolism; UMP biosynthesis via de novo pathway; UMP from orotate: step 2/2. Its function is as follows. Catalyzes the decarboxylation of orotidine 5'-monophosphate (OMP) to uridine 5'-monophosphate (UMP). This Malacoplasma penetrans (strain HF-2) (Mycoplasma penetrans) protein is Orotidine 5'-phosphate decarboxylase.